A 405-amino-acid chain; its full sequence is Formate-dependent phosphoribosylglycinamide formyltransferase (405 aa).

Residues 22 to 23 (EL) and glutamate 82 contribute to the N(1)-(5-phospho-beta-D-ribosyl)glycinamide site. Residues arginine 115, lysine 162, 167-172 (SSGKGQ), 202-205 (EGFI), and glutamate 210 contribute to the ATP site. The ATP-grasp domain occupies 120–320 (RLAAETLGLA…EFELHARAIL (201 aa)). Glutamate 279 and glutamate 291 together coordinate Mg(2+). N(1)-(5-phospho-beta-D-ribosyl)glycinamide-binding positions include aspartate 298, lysine 367, and 374–375 (RR).

This sequence belongs to the PurK/PurT family. In terms of assembly, homodimer.

It catalyses the reaction N(1)-(5-phospho-beta-D-ribosyl)glycinamide + formate + ATP = N(2)-formyl-N(1)-(5-phospho-beta-D-ribosyl)glycinamide + ADP + phosphate + H(+). It participates in purine metabolism; IMP biosynthesis via de novo pathway; N(2)-formyl-N(1)-(5-phospho-D-ribosyl)glycinamide from N(1)-(5-phospho-D-ribosyl)glycinamide (formate route): step 1/1. Functionally, involved in the de novo purine biosynthesis. Catalyzes the transfer of formate to 5-phospho-ribosyl-glycinamide (GAR), producing 5-phospho-ribosyl-N-formylglycinamide (FGAR). Formate is provided by PurU via hydrolysis of 10-formyl-tetrahydrofolate. This is Formate-dependent phosphoribosylglycinamide formyltransferase from Delftia acidovorans (strain DSM 14801 / SPH-1).